Reading from the N-terminus, the 87-residue chain is Small ribosomal subunit protein uS15 (87 aa).

It belongs to the universal ribosomal protein uS15 family. As to quaternary structure, part of the 30S ribosomal subunit. Forms a bridge to the 50S subunit in the 70S ribosome, contacting the 23S rRNA.

In terms of biological role, one of the primary rRNA binding proteins, it binds directly to 16S rRNA where it helps nucleate assembly of the platform of the 30S subunit by binding and bridging several RNA helices of the 16S rRNA. Forms an intersubunit bridge (bridge B4) with the 23S rRNA of the 50S subunit in the ribosome. The sequence is that of Small ribosomal subunit protein uS15 from Clostridium botulinum (strain Eklund 17B / Type B).